A 330-amino-acid chain; its full sequence is Aspartate--ammonia ligase (330 aa).

Belongs to the class-II aminoacyl-tRNA synthetase family. AsnA subfamily.

It is found in the cytoplasm. The enzyme catalyses L-aspartate + NH4(+) + ATP = L-asparagine + AMP + diphosphate + H(+). The protein operates within amino-acid biosynthesis; L-asparagine biosynthesis; L-asparagine from L-aspartate (ammonia route): step 1/1. The chain is Aspartate--ammonia ligase from Cronobacter sakazakii (strain ATCC BAA-894) (Enterobacter sakazakii).